Reading from the N-terminus, the 255-residue chain is Phosphate import ATP-binding protein PstB (255 aa).

Positions 10–250 (INIKDLNLWY…PQMKSTEDYI (241 aa)) constitute an ABC transporter domain. Position 42–49 (42–49 (GPSGCGKS)) interacts with ATP.

This sequence belongs to the ABC transporter superfamily. Phosphate importer (TC 3.A.1.7) family. The complex is composed of two ATP-binding proteins (PstB), two transmembrane proteins (PstC and PstA) and a solute-binding protein (PstS).

Its subcellular location is the cell membrane. It carries out the reaction phosphate(out) + ATP + H2O = ADP + 2 phosphate(in) + H(+). Its function is as follows. Part of the ABC transporter complex PstSACB involved in phosphate import. Responsible for energy coupling to the transport system. The chain is Phosphate import ATP-binding protein PstB from Methanococcoides burtonii (strain DSM 6242 / NBRC 107633 / OCM 468 / ACE-M).